The primary structure comprises 66 residues: Stress-associated endoplasmic reticulum protein 1 (66 aa).

Residues 1-33 (MVAKQRIRMANEKHSKNITQRGNVAKTSRNAPG) are disordered. Residues 1-38 (MVAKQRIRMANEKHSKNITQRGNVAKTSRNAPGEKASV) lie on the Cytoplasmic side of the membrane. The segment covering 17–30 (NITQRGNVAKTSRN) has biased composition (polar residues). The helical transmembrane segment at 39-59 (GPWLLALFIFVVCGSAIFQII) threads the bilayer. At 60-66 (QSIRMGM) the chain is on the extracellular side.

The protein belongs to the RAMP4 family. As to quaternary structure, interacts with SEC61B, SEC61A1 and the SEC61 complex. Interacts with CANX.

Its subcellular location is the membrane. The protein resides in the endoplasmic reticulum membrane. Functionally, interacts with target proteins during their translocation into the lumen of the endoplasmic reticulum. Protects unfolded target proteins against degradation during ER stress. May facilitate glycosylation of target proteins after termination of ER stress. May modulate the use of N-glycosylation sites on target proteins. The chain is Stress-associated endoplasmic reticulum protein 1 (SERP1) from Pongo abelii (Sumatran orangutan).